The sequence spans 199 residues: Large ribosomal subunit protein bL25 (199 aa).

The protein belongs to the bacterial ribosomal protein bL25 family. CTC subfamily. As to quaternary structure, part of the 50S ribosomal subunit; part of the 5S rRNA/L5/L18/L25 subcomplex. Contacts the 5S rRNA. Binds to the 5S rRNA independently of L5 and L18.

Its function is as follows. This is one of the proteins that binds to the 5S RNA in the ribosome where it forms part of the central protuberance. This chain is Large ribosomal subunit protein bL25, found in Caulobacter sp. (strain K31).